Consider the following 265-residue polypeptide: 4-hydroxy-tetrahydrodipicolinate reductase (265 aa).

Residues Gly7 to Met12, Asp33, Gly96 to Thr98, and Ala120 to Phe123 each bind NAD(+). The active-site Proton donor/acceptor is the His153. His154 is a binding site for (S)-2,3,4,5-tetrahydrodipicolinate. Lys157 (proton donor) is an active-site residue. Gly163–Thr164 is a binding site for (S)-2,3,4,5-tetrahydrodipicolinate.

It belongs to the DapB family.

It localises to the cytoplasm. The enzyme catalyses (S)-2,3,4,5-tetrahydrodipicolinate + NAD(+) + H2O = (2S,4S)-4-hydroxy-2,3,4,5-tetrahydrodipicolinate + NADH + H(+). It carries out the reaction (S)-2,3,4,5-tetrahydrodipicolinate + NADP(+) + H2O = (2S,4S)-4-hydroxy-2,3,4,5-tetrahydrodipicolinate + NADPH + H(+). The protein operates within amino-acid biosynthesis; L-lysine biosynthesis via DAP pathway; (S)-tetrahydrodipicolinate from L-aspartate: step 4/4. Its function is as follows. Catalyzes the conversion of 4-hydroxy-tetrahydrodipicolinate (HTPA) to tetrahydrodipicolinate. This Cupriavidus taiwanensis (strain DSM 17343 / BCRC 17206 / CCUG 44338 / CIP 107171 / LMG 19424 / R1) (Ralstonia taiwanensis (strain LMG 19424)) protein is 4-hydroxy-tetrahydrodipicolinate reductase.